A 455-amino-acid polypeptide reads, in one-letter code: Eukaryotic translation initiation factor 3 subunit E (455 aa).

The PCI domain maps to 256–425 (TDLFFSPAYI…GTVIMNHPPQ (170 aa)).

Belongs to the eIF-3 subunit E family. Component of the eukaryotic translation initiation factor 3 (eIF-3) complex.

Its subcellular location is the cytoplasm. Its function is as follows. Component of the eukaryotic translation initiation factor 3 (eIF-3) complex, which is involved in protein synthesis of a specialized repertoire of mRNAs and, together with other initiation factors, stimulates binding of mRNA and methionyl-tRNAi to the 40S ribosome. The eIF-3 complex specifically targets and initiates translation of a subset of mRNAs involved in cell proliferation. This Neosartorya fischeri (strain ATCC 1020 / DSM 3700 / CBS 544.65 / FGSC A1164 / JCM 1740 / NRRL 181 / WB 181) (Aspergillus fischerianus) protein is Eukaryotic translation initiation factor 3 subunit E (int6).